The following is a 117-amino-acid chain: Large ribosomal subunit protein eL34 (117 aa).

Residue Ser-12 is modified to Phosphoserine. Over residues 16–28 (ASNKTRLSRTPGQ) the composition is skewed to polar residues. Positions 16-35 (ASNKTRLSRTPGQQDRLPLH) are disordered. Lys-108 is covalently cross-linked (Glycyl lysine isopeptide (Lys-Gly) (interchain with G-Cter in SUMO2)).

Belongs to the eukaryotic ribosomal protein eL34 family. In terms of assembly, component of the large ribosomal subunit.

It localises to the cytoplasm. It is found in the cytosol. The protein resides in the endoplasmic reticulum. In terms of biological role, component of the large ribosomal subunit. The ribosome is a large ribonucleoprotein complex responsible for the synthesis of proteins in the cell. The polypeptide is Large ribosomal subunit protein eL34 (RPL34) (Vicugna pacos (Alpaca)).